A 622-amino-acid chain; its full sequence is Zinc finger protein ZIC 5 (622 aa).

Disordered regions lie at residues 50–171 (MHLH…KGHS), 190–223 (HGAP…SASG), 232–251 (GSAL…GHPL), and 321–349 (PGPH…HLPG). Positions 126–151 (APPPPAPPLPPSQSSSPPPPPPPPPA) are enriched in pro residues. Pro residues predominate over residues 329-340 (APPPAPPPAPAP). Residues 422-444 (EDCPREGKPFKAKYKLINHIRVH) form a C2H2-type 1; degenerate zinc finger. 3 consecutive C2H2-type zinc fingers follow at residues 450 to 474 (FPCP…KRTH), 480 to 504 (FKCE…SHVH), and 510 to 534 (YYCK…MKIH). 2 disordered regions span residues 531–573 (MKIH…STLS) and 590–622 (APSH…RTIH). A phosphoserine mark is found at Ser537, Ser541, and Ser559. Residues 595–604 (HTPSSNGTTS) show a composition bias toward polar residues.

Belongs to the GLI C2H2-type zinc-finger protein family.

Its subcellular location is the nucleus. Essential for neural crest development, converting cells from an epidermal fate to a neural crest cell fate. Binds to DNA. The protein is Zinc finger protein ZIC 5 (Zic5) of Mus musculus (Mouse).